The primary structure comprises 335 residues: 2-acylglycerol O-acyltransferase 1 (335 aa).

Transmembrane regions (helical) follow at residues 24-44 and 104-124; these read WLLSFLLFAQVCLGIIVFLII and YIFGFHPHGVLVVGAFGNFCT. N-linked (GlcNAc...) asparagine glycans are attached at residues asparagine 125 and asparagine 180.

It belongs to the diacylglycerol acyltransferase family.

It is found in the endoplasmic reticulum membrane. It carries out the reaction a 2-acylglycerol + an acyl-CoA = a 1,2-diacylglycerol + CoA. The catalysed reaction is 2-(9Z-octadecenoyl)-glycerol + butanoyl-CoA = 1-butanoyl-2-(9Z-octadecenoyl)-glycerol + CoA. It catalyses the reaction 2-(9Z-octadecenoyl)-glycerol + octanoyl-CoA = 1-octanoyl-2-(9Z-octadecenoyl)-glycerol + CoA. The enzyme catalyses 2-(9Z-octadecenoyl)-glycerol + dodecanoyl-CoA = 1-dodecanoyl-2-(9Z-octadecenoyl)-glycerol + CoA. It carries out the reaction 2-(9Z-octadecenoyl)-glycerol + tetradecanoyl-CoA = 1-tetradecanoyl-2-(9Z-octadecenoyl)-glycerol + CoA. The catalysed reaction is 2-(9Z-octadecenoyl)-glycerol + hexadecanoyl-CoA = 1-hexadecanoyl-2-(9Z-octadecenoyl)-glycerol + CoA. It catalyses the reaction 2-(9Z-octadecenoyl)-glycerol + octadecanoyl-CoA = 1-octadecanoyl-2-(9Z-octadecenoyl)-glycerol + CoA. The enzyme catalyses eicosanoyl-CoA + 2-(9Z-octadecenoyl)-glycerol = 1-eicosanoyl-2-(9Z-octadecenoyl)-glycerol + CoA. It carries out the reaction 2-(9Z-octadecenoyl)-glycerol + (9Z)-octadecenoyl-CoA = 1,2-di-(9Z-octadecenoyl)-glycerol + CoA. The catalysed reaction is 2-(9Z-octadecenoyl)-glycerol + (9Z,12Z)-octadecadienoyl-CoA = 1-(9Z,12Z-octadecadienoyl)-2-(9Z-octadecenoyl)-glycerol + CoA. It catalyses the reaction 2-(9Z-octadecenoyl)-glycerol + (5Z,8Z,11Z,14Z)-eicosatetraenoyl-CoA = 1-(5Z,8Z,11Z,14Z-eicosatetraenoyl)-2-(9Z-octadecenoyl)-glycerol + CoA. The enzyme catalyses a 2-acylglycerol + an acyl-CoA = a 1,2-diacyl-sn-glycerol + CoA. It carries out the reaction a 2-acylglycerol + an acyl-CoA = a 2,3-diacyl-sn-glycerol + CoA. The catalysed reaction is a 1-acylglycerol + an acyl-CoA = a 1,2-diacylglycerol + CoA. It catalyses the reaction 1-dodecanoylglycerol + (9Z)-octadecenoyl-CoA = 1-dodecanoyl-2-(9Z-octadecenoyl)-glycerol + CoA. The enzyme catalyses 1-tetradecanoylglycerol + (9Z)-octadecenoyl-CoA = 1-tetradecanoyl-2-(9Z-octadecenoyl)-glycerol + CoA. It carries out the reaction 1-hexadecanoylglycerol + (9Z)-octadecenoyl-CoA = 1-hexadecanoyl-2-(9Z-octadecenoyl)-glycerol + CoA. The catalysed reaction is 1-(9Z-octadecenoyl)-glycerol + (9Z)-octadecenoyl-CoA = 1,2-di-(9Z-octadecenoyl)-glycerol + CoA. It catalyses the reaction 1-(9Z,12Z-octadecadienoyl)-glycerol + (9Z)-octadecenoyl-CoA = 1-(9Z,12Z-octadecadienoyl)-2-(9Z-octadecenoyl)-glycerol + CoA. The enzyme catalyses 1-(9Z,12Z,15Z-octadecatrienoyl)-glycerol + (9Z)-octadecenoyl-CoA = 1-(9Z,12Z,15Z-octadecatrienoyl)-2-(9Z-octadecenoyl)-glycerol + CoA. It carries out the reaction 1-(5Z,8Z,11Z,14Z-eicosatetraenoyl)-glycerol + (9Z)-octadecenoyl-CoA = 1-(5Z,8Z,11Z,14Z-eicosatetraenoyl)-2-(9Z-octadecenoyl)-glycerol + CoA. The catalysed reaction is a 1-acylglycerol + an acyl-CoA = a 1,3-diacylglycerol + CoA. It catalyses the reaction 1-dodecanoylglycerol + (9Z)-octadecenoyl-CoA = 1-dodecanoyl-3-(9Z-octadecenoyl)-glycerol + CoA. The enzyme catalyses 1-hexadecanoylglycerol + (9Z)-octadecenoyl-CoA = 1-(9Z-octadecenoyl)-3-hexadecanoylglycerol + CoA. It carries out the reaction 1-octadecanoylglycerol + (9Z)-octadecenoyl-CoA = 1-octadecanoyl-3-(9Z-octadecenoyl)-glycerol + CoA. The catalysed reaction is 1-(9Z-octadecenoyl)-sn-glycerol + (9Z)-octadecenoyl-CoA = 1,3-di-(9Z-octadecenoyl)-glycerol + CoA. It catalyses the reaction 1-(9Z,12Z-octadecadienoyl)-glycerol + (9Z)-octadecenoyl-CoA = 1-(9Z-octadecenoyl)-3-(9Z,12Z-octadecadienoyl)-glycerol + CoA. The enzyme catalyses 1-(9Z,12Z,15Z-octadecatrienoyl)-glycerol + (9Z)-octadecenoyl-CoA = 1-(9Z,12Z,15Z-octadecatrienoyl)-3-(9Z-octadecenoyl)-glycerol + CoA. It carries out the reaction a 1-acyl-sn-glycerol + an acyl-CoA = a 1,3-diacyl-sn-glycerol + CoA. The catalysed reaction is a 3-acyl-sn-glycerol + an acyl-CoA = a 1,3-diacyl-sn-glycerol + CoA. It catalyses the reaction 3-octadecanoyl-sn-glycerol + (9Z)-octadecenoyl-CoA = 1-(9Z-octadecenoyl)-3-octadecanoyl-sn-glycerol + CoA. Its pathway is glycerolipid metabolism; triacylglycerol biosynthesis. Functionally, involved in glycerolipid synthesis and lipid metabolism. Catalyzes the formation of diacylglycerol, the precursor of triacylglycerol, by transferring the acyl chain of a fatty acyl-CoA to a monoacylglycerol, mainly at the sn-1 or sn-3 positions. It uses both sn-2-monoacylglycerol (2-acylglycerol) and sn-1-monoacylglycerol (1-acyl-sn-glycerol) equally well as substrates, and uses sn-3-monoacylglycerol (3-acyl-sn-glycerol) with lower efficiency. Probably not involved in absorption of dietary fat in the small intestine. This chain is 2-acylglycerol O-acyltransferase 1 (MOGAT1), found in Bos taurus (Bovine).